Consider the following 331-residue polypeptide: Phospholipase A2 inhibitor (331 aa).

The signal sequence occupies residues 1–23; sequence MKSSVPSLLIACLVMSLNSYTQQ. A glycan (N-linked (GlcNAc...) asparagine) is linked at Asn35. LRR repeat units lie at residues 78–101, 103–125, 127–149, 150–173, 175–197, 199–221, 223–244, and 245–268; these read LPNLQELHLSNNRLKTLPSGLFRN, PQLHTLDLSTNHLEDLPPEIFTN, SSLILLPLSENQLAELHPSWFQT, LGELRILGLDHNQVKEIPISCFDK, KKLTSLDLSFNLLRRLAPEMFSG, DNLEKLILESNPIQCIVGRTFHW, PKLTVLSLKNSSLTNIMGFFQP, and LEQLELLDLSDNELTTMEPPVYKT. A glycan (N-linked (GlcNAc...) asparagine) is linked at Asn125. N-linked (GlcNAc...) asparagine glycosylation is present at Asn232. Residue Asn271 is glycosylated (N-linked (GlcNAc...) asparagine). The region spanning 279–330 is the LRRCT domain; it reads NPWACDCRLDNLLTWVNEHNIHLYSKEEIVCASPKHFKGECATSLHKSQICP.

In terms of assembly, homotrimer.

It localises to the secreted. Inhibits the enzymatic activity of the basic phospholipase A2 (PLA2). The chain is Phospholipase A2 inhibitor from Gloydius brevicaudus siniticus (Chinese mamushi).